Reading from the N-terminus, the 211-residue chain is Ribonuclease HII (211 aa).

Positions 21–211 (SSIAGLDEAG…APLKSMFDVI (191 aa)) constitute an RNase H type-2 domain. Residues D27, E28, and D122 each contribute to the a divalent metal cation site.

It belongs to the RNase HII family. Mn(2+) serves as cofactor. It depends on Mg(2+) as a cofactor.

The protein localises to the cytoplasm. It carries out the reaction Endonucleolytic cleavage to 5'-phosphomonoester.. Its function is as follows. Endonuclease that specifically degrades the RNA of RNA-DNA hybrids. The chain is Ribonuclease HII from Dehalococcoides mccartyi (strain ATCC BAA-2266 / KCTC 15142 / 195) (Dehalococcoides ethenogenes (strain 195)).